A 750-amino-acid chain; its full sequence is ABC transporter D family member 3 (750 aa).

The segment covering 1 to 14 (MKKNNVNNITETLN) has biased composition (polar residues). The segment at 1 to 32 (MKKNNVNNITETLNSSSSSSSSSGSSSDEEVK) is disordered. Residues 15–26 (SSSSSSSSSGSS) are compositionally biased toward low complexity. 4 consecutive transmembrane segments (helical) span residues 63–83 (IVII…LLFG), 123–143 (FAIG…SIMA), 188–208 (FTTL…VVVY), and 215–235 (TTID…GYFI). The ABC transmembrane type-1 domain occupies 74 to 362 (PLLLFLLLFG…EQAKQQFEAL (289 aa)). Positions 334-370 (ALLKRSNKNIKNEELLVEEEQAKQQFEALLKNKKRVI) form a coiled coil. The helical transmembrane segment at 382-402 (MFTFFSPLINYFIISIPVFFL) threads the bilayer. An ABC transporter domain is found at 507-737 (ITLDDVTYFT…SNNINTINID (231 aa)). 540 to 547 (GPSGSGKS) lines the ATP pocket.

This sequence belongs to the ABC transporter superfamily. ABCD family. Peroxisomal fatty acyl CoA transporter (TC 3.A.1.203) subfamily.

Its subcellular location is the membrane. The chain is ABC transporter D family member 3 (abcD3) from Dictyostelium discoideum (Social amoeba).